The sequence spans 122 residues: Acidic phospholipase A2 homolog vipoxin A chain (122 aa).

Intrachain disulfides connect C26/C115, C28/C44, C43/C95, C49/C122, C50/C88, C57/C81, and C75/C86.

It belongs to the phospholipase A2 family. Group II subfamily. D49 sub-subfamily. Heterodimer of A and B (AC P14420) chains; non-covalently linked. The A chain (acidic) is non-toxic, and increases the toxicity of the B chain (basic). The A chain may act as factor stabilizing the complex structure and hence retaining its toxicity by preventing non-specific binding. Upon binding to the target membranes the A chain may dissociate. In terms of tissue distribution, expressed by the venom gland.

Its subcellular location is the secreted. Heterodimer: postsynaptic neurotoxin. Functionally, monomer: Acidic phospholipase A2 homolog that is non-toxic. This Vipera ammodytes meridionalis (Eastern sand viper) protein is Acidic phospholipase A2 homolog vipoxin A chain.